Here is a 1623-residue protein sequence, read N- to C-terminus: ATP-binding cassette sub-family A member 9 (1623 aa).

A helical membrane pass occupies residues 31–51; it reads LLEWLFSLLLILFVYQLSSNL. Asparagine 120 carries N-linked (GlcNAc...) asparagine glycosylation. The next 6 membrane-spanning stretches (helical) occupy residues 225–245, 265–285, 295–315, 329–349, 354–374, and 398–418; these read FFIFFCVISFSSLIYYLSVNI, AFWLSWSLMYAGFILVVAVLM, VVLTGFMVVFLLFLFYGLSLI, FLTGLAIFILTVFWGSLGFTA, LPAFVEWTLCFLSPFAFTTGM, and LIMATLFMLVLDALLYLVLAL. The ABC transporter 1 domain occupies 481 to 716; it reads IRIKNLKKEY…WGIGYHLSLH (236 aa). An ATP-binding site is contributed by 517-524; that stretch reads GHSGAGKT. 7 consecutive transmembrane segments (helical) span residues 863–883, 1025–1045, 1071–1091, 1107–1127, 1135–1155, 1163–1183, and 1199–1219; these read LMTVLLLFGISFVPQLLEHLV, AFFWIPVAASLTPYIAMGSIS, LVDIPIYFLILFLMQIMDSVF, IPCSIGYASSLIFMTYVISFI, SGIWSFFFLIVTIFFIIATDI, LLICTFLVPPFTLIGSLLIFS, and QLVFLALLIPYLHFLLFFFIL. Positions 1287-1520 constitute an ABC transporter 2 domain; the sequence is LRKEYIGRTK…FGKDYLLEMK (234 aa). 1325-1332 contacts ATP; the sequence is GHNGAGKS.

This sequence belongs to the ABC transporter superfamily. ABCA family. In terms of tissue distribution, highly expressed in heart and to lower extent in kidney, brain and spleen. Weakly expressed in developing and adult brains. Weakly expressed in the cerebellar granular layer at P14 and P21.

The protein localises to the membrane. In terms of biological role, transporter that may play a role in monocyte differentiation and lipid transport and homeostasis. In Mus musculus (Mouse), this protein is ATP-binding cassette sub-family A member 9 (Abca9).